The sequence spans 507 residues: Probable Xaa-Pro aminopeptidase HCAG_02413 (507 aa).

Mn(2+) is bound by residues aspartate 283, aspartate 294, glutamate 431, and glutamate 469.

This sequence belongs to the peptidase M24B family. Mn(2+) is required as a cofactor.

It catalyses the reaction Release of any N-terminal amino acid, including proline, that is linked to proline, even from a dipeptide or tripeptide.. Functionally, catalyzes the removal of a penultimate prolyl residue from the N-termini of peptides. The protein is Probable Xaa-Pro aminopeptidase HCAG_02413 of Ajellomyces capsulatus (strain NAm1 / WU24) (Darling's disease fungus).